A 133-amino-acid chain; its full sequence is ATP synthase epsilon chain (133 aa).

This sequence belongs to the ATPase epsilon chain family. As to quaternary structure, F-type ATPases have 2 components, CF(1) - the catalytic core - and CF(0) - the membrane proton channel. CF(1) has five subunits: alpha(3), beta(3), gamma(1), delta(1), epsilon(1). CF(0) has three main subunits: a, b and c.

The protein resides in the cell inner membrane. Functionally, produces ATP from ADP in the presence of a proton gradient across the membrane. This chain is ATP synthase epsilon chain, found in Maricaulis maris (strain MCS10) (Caulobacter maris).